We begin with the raw amino-acid sequence, 166 residues long: Large ribosomal subunit protein uL10 (166 aa).

This sequence belongs to the universal ribosomal protein uL10 family. As to quaternary structure, part of the ribosomal stalk of the 50S ribosomal subunit. The N-terminus interacts with L11 and the large rRNA to form the base of the stalk. The C-terminus forms an elongated spine to which L12 dimers bind in a sequential fashion forming a multimeric L10(L12)X complex.

In terms of biological role, forms part of the ribosomal stalk, playing a central role in the interaction of the ribosome with GTP-bound translation factors. The chain is Large ribosomal subunit protein uL10 from Listeria innocua serovar 6a (strain ATCC BAA-680 / CLIP 11262).